The following is a 514-amino-acid chain: 2,3-bisphosphoglycerate-independent phosphoglycerate mutase (514 aa).

D14 and S64 together coordinate Mn(2+). S64 serves as the catalytic Phosphoserine intermediate. Substrate-binding positions include H125, R155–D156, R187, R193, R263–R266, and K336. Mn(2+) is bound by residues D403, H407, D444, H445, and H463.

This sequence belongs to the BPG-independent phosphoglycerate mutase family. As to quaternary structure, monomer. Mn(2+) is required as a cofactor.

The enzyme catalyses (2R)-2-phosphoglycerate = (2R)-3-phosphoglycerate. The protein operates within carbohydrate degradation; glycolysis; pyruvate from D-glyceraldehyde 3-phosphate: step 3/5. Catalyzes the interconversion of 2-phosphoglycerate and 3-phosphoglycerate. This is 2,3-bisphosphoglycerate-independent phosphoglycerate mutase from Shewanella baltica (strain OS185).